Here is a 391-residue protein sequence, read N- to C-terminus: Pectate lyase B (391 aa).

Positions 1-30 (MKKTVRSLCSTALALTLGFTLLSGPASVQA) are cleaved as a signal peptide. Ca(2+) contacts are provided by Asp181, Asp203, and Asp207. Residue Arg305 is part of the active site.

It belongs to the polysaccharide lyase 1 family. The cofactor is Ca(2+).

It is found in the secreted. The catalysed reaction is Eliminative cleavage of (1-&gt;4)-alpha-D-galacturonan to give oligosaccharides with 4-deoxy-alpha-D-galact-4-enuronosyl groups at their non-reducing ends.. It carries out the reaction Eliminative cleavage of (1-&gt;4)-alpha-D-galacturonan methyl ester to give oligosaccharides with 4-deoxy-6-O-methyl-alpha-D-galact-4-enuronosyl groups at their non-reducing ends.. The protein operates within glycan metabolism; pectin degradation. Its function is as follows. Catalyzes the depolymerization of both polygalacturonate and pectins of various methyl esterification degree, with an endo mode of action. Shows the highest activity on 20 to 34% methylated pectin but retains 67%, 51%, 25%, and 1% of its maximum activity on polygalacturonate and 8.5%, 55 to 70%, and 90% methylated pectin, respectively. In Paenibacillus amylolyticus, this protein is Pectate lyase B.